Reading from the N-terminus, the 769-residue chain is Serine protease HtrA-like (769 aa).

Over residues Met-1 to Glu-20 the composition is skewed to basic residues. The segment at Met-1–Ala-390 is disordered. Basic and acidic residues-rich tracts occupy residues Phe-21–Lys-64 and Leu-71–Lys-108. Polar residues predominate over residues Tyr-126–Lys-137. Residues Ser-138–Ser-186 show a composition bias toward basic and acidic residues. The span at Gln-247–Ser-262 shows a compositional bias: polar residues. 2 stretches are compositionally biased toward basic and acidic residues: residues Gln-264 to Asp-296 and Lys-310 to Asn-330. Over residues Ala-331 to His-347 the composition is skewed to polar residues. A compositionally biased stretch (basic and acidic residues) spans Arg-348–Asn-364. Polar residues predominate over residues Gly-365–Ala-390. The helical transmembrane segment at Leu-410–Val-430 threads the bilayer. Residues His-504, Asp-534, and Ser-619 each act as charge relay system in the active site. The 54-residue stretch at Ile-680–Asp-733 folds into the PDZ domain.

Belongs to the peptidase S1C family.

The protein resides in the cell membrane. This is Serine protease HtrA-like from Staphylococcus aureus (strain COL).